The sequence spans 366 residues: MDHIKLIRNKIDINHIHQLIIDQSCGACSVFVGTTRDHFEGKKVISLEYEAYESMALKEMGKICSELRIRWPTLKHIAIYHRLGSVPVAEESVVIAVSAPHRPAALESVSFAVDKLKSSVPIWKKEIYENDQIGEWKANMECPWPQFTETSSNAFEYSLCKIERQVENISESKLVQIRVSDIELTRRIKCFLKRKRDEINLHNIIDFKQQLRDSPRAESMLPKDSCARTQSILVKQQQSISHIKVHRAFEDRRQTRPDYSSQLNKLMATKHKHCELVKSNVLKNARLQNIEEYMRITPDDEDNIYNRIKNIENRILILESTSPEYKYYIKLGKESNNINKKESKKGLYQSDRLSEFISGIKRQYEL.

Substrate-binding positions include 101–102 (HR), Lys-117, and 124–126 (KKE).

The protein belongs to the MoaE family. MOCS2B subfamily. Heterotetramer; composed of 2 small (Mocs2A) and 2 large (Mocs2B) subunits.

It localises to the cytoplasm. The enzyme catalyses 2 [molybdopterin-synthase sulfur-carrier protein]-C-terminal-Gly-aminoethanethioate + cyclic pyranopterin phosphate + H2O = molybdopterin + 2 [molybdopterin-synthase sulfur-carrier protein]-C-terminal Gly-Gly + 2 H(+). Its pathway is cofactor biosynthesis; molybdopterin biosynthesis. Catalytic subunit of the molybdopterin synthase complex, a complex that catalyzes the conversion of precursor Z into molybdopterin. Acts by mediating the incorporation of 2 sulfur atoms from thiocarboxylated Mocs2A into precursor Z to generate a dithiolene group. The chain is Molybdopterin synthase catalytic subunit from Drosophila mojavensis (Fruit fly).